Consider the following 808-residue polypeptide: Probable inorganic carbon transporter subunit DabA (808 aa).

Zn(2+) contacts are provided by cysteine 335, aspartate 337, histidine 497, and cysteine 512.

The protein belongs to the inorganic carbon transporter (TC 9.A.2) DabA family. Forms a complex with DabB. The cofactor is Zn(2+).

It localises to the cell inner membrane. In terms of biological role, part of an energy-coupled inorganic carbon pump. The polypeptide is Probable inorganic carbon transporter subunit DabA (Rhodopseudomonas palustris (strain ATCC BAA-98 / CGA009)).